We begin with the raw amino-acid sequence, 346 residues long: fMet-Leu-Phe receptor (346 aa).

Residues Asn-1 and Asn-7 are each glycosylated (N-linked (GlcNAc...) asparagine). At Asn-1–Ile-24 the chain is on the extracellular side. A helical membrane pass occupies residues Ile-25 to Val-47. Residues Ala-48–Thr-58 are Cytoplasmic-facing. Residues Ile-59–Val-80 traverse the membrane as a helical segment. Residues Arg-81 to Phe-97 are Extracellular-facing. An intrachain disulfide couples Cys-95 to Cys-173. A helical transmembrane segment spans residues Ile-98–Leu-118. The Cytoplasmic segment spans residues Asp-119–Ser-137. Residues Leu-138–Ile-159 traverse the membrane as a helical segment. The Extracellular portion of the chain corresponds to Arg-160–Arg-202. A helical transmembrane segment spans residues Phe-203 to Thr-223. The Cytoplasmic portion of the chain corresponds to Lys-224–Val-239. Residues Leu-240–Val-263 form a helical membrane-spanning segment. At Arg-264–Val-282 the chain is on the extracellular side. A helical transmembrane segment spans residues Thr-283 to Gly-302. Over Gln-303–Ala-346 the chain is Cytoplasmic. The tract at residues Thr-322 to Ala-346 is disordered. Residues Glu-323 to Pro-338 are compositionally biased toward polar residues.

The protein belongs to the G-protein coupled receptor 1 family. Phosphorylated; which is necessary for desensitization.

Its subcellular location is the cell membrane. In terms of biological role, high affinity receptor for N-formyl-methionyl peptides (fMLP), which are powerful neutrophil chemotactic factors. Binding of fMLP to the receptor stimulates intracellular calcium mobilization and superoxide anion release. This response is mediated via a G-protein that activates a phosphatidylinositol-calcium second messenger system. Receptor for TAFA4, mediates its effects on chemoattracting macrophages, promoting phagocytosis and increasing ROS release. Receptor for cathepsin CTSG, leading to increased phagocyte chemotaxis. This Pan troglodytes (Chimpanzee) protein is fMet-Leu-Phe receptor (FPR1).